Consider the following 347-residue polypeptide: NADH-quinone oxidoreductase subunit H (347 aa).

Transmembrane regions (helical) follow at residues 14-34, 82-102, 115-135, 161-181, 198-218, 258-278, 285-305, and 321-341; these read IMIG…AYIL, AVFL…WAVI, VGIL…IMGG, IGFV…TDIV, LLDW…ISAL, AIVL…LPPL, WVPG…MFGI, and LGWK…AFVL.

The protein belongs to the complex I subunit 1 family. NDH-1 is composed of 14 different subunits. Subunits NuoA, H, J, K, L, M, N constitute the membrane sector of the complex.

The protein resides in the cell inner membrane. The catalysed reaction is a quinone + NADH + 5 H(+)(in) = a quinol + NAD(+) + 4 H(+)(out). Functionally, NDH-1 shuttles electrons from NADH, via FMN and iron-sulfur (Fe-S) centers, to quinones in the respiratory chain. The immediate electron acceptor for the enzyme in this species is believed to be ubiquinone. Couples the redox reaction to proton translocation (for every two electrons transferred, four hydrogen ions are translocated across the cytoplasmic membrane), and thus conserves the redox energy in a proton gradient. This subunit may bind ubiquinone. This is NADH-quinone oxidoreductase subunit H from Allorhizobium ampelinum (strain ATCC BAA-846 / DSM 112012 / S4) (Agrobacterium vitis (strain S4)).